A 296-amino-acid chain; its full sequence is Formamidopyrimidine-DNA glycosylase (296 aa).

Catalysis depends on P2, which acts as the Schiff-base intermediate with DNA. E3 acts as the Proton donor in catalysis. The active-site Proton donor; for beta-elimination activity is K61. DNA is bound by residues H104, R123, and K169. Residues 255 to 289 (DAYGREGEPCRRCGAIMRREKFMNRSSFYCPRCQP) form an FPG-type zinc finger. R279 (proton donor; for delta-elimination activity) is an active-site residue.

Belongs to the FPG family. Monomer. It depends on Zn(2+) as a cofactor.

It carries out the reaction Hydrolysis of DNA containing ring-opened 7-methylguanine residues, releasing 2,6-diamino-4-hydroxy-5-(N-methyl)formamidopyrimidine.. It catalyses the reaction 2'-deoxyribonucleotide-(2'-deoxyribose 5'-phosphate)-2'-deoxyribonucleotide-DNA = a 3'-end 2'-deoxyribonucleotide-(2,3-dehydro-2,3-deoxyribose 5'-phosphate)-DNA + a 5'-end 5'-phospho-2'-deoxyribonucleoside-DNA + H(+). In terms of biological role, involved in base excision repair of DNA damaged by oxidation or by mutagenic agents. Acts as a DNA glycosylase that recognizes and removes damaged bases. Has a preference for oxidized purines, such as 7,8-dihydro-8-oxoguanine (8-oxoG). Has AP (apurinic/apyrimidinic) lyase activity and introduces nicks in the DNA strand. Cleaves the DNA backbone by beta-delta elimination to generate a single-strand break at the site of the removed base with both 3'- and 5'-phosphates. The sequence is that of Formamidopyrimidine-DNA glycosylase from Mycobacterium sp. (strain JLS).